The following is a 424-amino-acid chain: Serine hydroxymethyltransferase (424 aa).

(6S)-5,6,7,8-tetrahydrofolate-binding positions include leucine 123 and 127-129 (GHL). An N6-(pyridoxal phosphate)lysine modification is found at lysine 232. Glutamate 245 serves as a coordination point for (6S)-5,6,7,8-tetrahydrofolate.

Belongs to the SHMT family. In terms of assembly, homodimer. The cofactor is pyridoxal 5'-phosphate.

The protein resides in the cytoplasm. It catalyses the reaction (6R)-5,10-methylene-5,6,7,8-tetrahydrofolate + glycine + H2O = (6S)-5,6,7,8-tetrahydrofolate + L-serine. Its pathway is one-carbon metabolism; tetrahydrofolate interconversion. The protein operates within amino-acid biosynthesis; glycine biosynthesis; glycine from L-serine: step 1/1. In terms of biological role, catalyzes the reversible interconversion of serine and glycine with tetrahydrofolate (THF) serving as the one-carbon carrier. This reaction serves as the major source of one-carbon groups required for the biosynthesis of purines, thymidylate, methionine, and other important biomolecules. Also exhibits THF-independent aldolase activity toward beta-hydroxyamino acids, producing glycine and aldehydes, via a retro-aldol mechanism. The chain is Serine hydroxymethyltransferase from Kocuria rhizophila (strain ATCC 9341 / DSM 348 / NBRC 103217 / DC2201).